The following is a 581-amino-acid chain: 2-succinyl-5-enolpyruvyl-6-hydroxy-3-cyclohexene-1-carboxylate synthase (581 aa).

Belongs to the TPP enzyme family. MenD subfamily. As to quaternary structure, homodimer. Requires Mg(2+) as cofactor. Mn(2+) serves as cofactor. The cofactor is thiamine diphosphate.

The catalysed reaction is isochorismate + 2-oxoglutarate + H(+) = 5-enolpyruvoyl-6-hydroxy-2-succinyl-cyclohex-3-ene-1-carboxylate + CO2. Its pathway is quinol/quinone metabolism; 1,4-dihydroxy-2-naphthoate biosynthesis; 1,4-dihydroxy-2-naphthoate from chorismate: step 2/7. The protein operates within quinol/quinone metabolism; menaquinone biosynthesis. In terms of biological role, catalyzes the thiamine diphosphate-dependent decarboxylation of 2-oxoglutarate and the subsequent addition of the resulting succinic semialdehyde-thiamine pyrophosphate anion to isochorismate to yield 2-succinyl-5-enolpyruvyl-6-hydroxy-3-cyclohexene-1-carboxylate (SEPHCHC). The chain is 2-succinyl-5-enolpyruvyl-6-hydroxy-3-cyclohexene-1-carboxylate synthase from Psychromonas ingrahamii (strain DSM 17664 / CCUG 51855 / 37).